The sequence spans 310 residues: D-alanyl-D-alanine endopeptidase (310 aa).

The N-terminal stretch at 1–25 (MPKFRVSLFSLALMLAVPFAPQAVA) is a signal peptide. Serine 67 acts as the Acyl-ester intermediate in catalysis. Catalysis depends on lysine 70, which acts as the Proton acceptor. The active site involves serine 124. Lysine 231 is a substrate binding site.

Belongs to the peptidase S11 family. Post-translationally, pbp8 is a proteolytic product of Pbp7.

It localises to the periplasm. Cell wall formation. May play a specialized role in remodeling the cell wall. Specifically hydrolyzes the DD-diaminopimelate-alanine bonds in high-molecular-mass murein sacculi. The polypeptide is D-alanyl-D-alanine endopeptidase (pbpG) (Escherichia coli (strain K12)).